The primary structure comprises 299 residues: Protease HtpX homolog (299 aa).

2 helical membrane passes run 14-34 (IVLLIVFFMLLAAIGAAVGYL) and 39-59 (LVGGMAIALIIGFIYAFSMIF). Residue His-143 participates in Zn(2+) binding. Glu-144 is an active-site residue. His-147 is a Zn(2+) binding site. A run of 2 helical transmembrane segments spans residues 158 to 178 (IAVALASAVTLISSIGGRMMW) and 198 to 218 (IILLIFSLLAIILAPLAASLV). Glu-227 is a Zn(2+) binding site.

The protein belongs to the peptidase M48B family. It depends on Zn(2+) as a cofactor.

Its subcellular location is the cell membrane. This is Protease HtpX homolog from Streptococcus mutans serotype c (strain ATCC 700610 / UA159).